The primary structure comprises 383 residues: Histidine decarboxylase (383 aa).

His-120 is a substrate binding site. Lys-233 is subject to N6-(pyridoxal phosphate)lysine.

This sequence belongs to the group II decarboxylase family. Homotetramer. Requires pyridoxal 5'-phosphate as cofactor.

The enzyme catalyses L-histidine + H(+) = histamine + CO2. The sequence is that of Histidine decarboxylase from Acinetobacter baumannii (strain AB307-0294).